Consider the following 82-residue polypeptide: Small ribosomal subunit protein uS17 (82 aa).

It belongs to the universal ribosomal protein uS17 family. In terms of assembly, part of the 30S ribosomal subunit.

One of the primary rRNA binding proteins, it binds specifically to the 5'-end of 16S ribosomal RNA. The chain is Small ribosomal subunit protein uS17 from Rickettsia rickettsii (strain Iowa).